A 153-amino-acid polypeptide reads, in one-letter code: Natriuretic peptides A (153 aa).

The N-terminal stretch at 1–25 is a signal peptide; that stretch reads MGSFSTIMASFLLFLAFQLQGQTRA. Propeptides lie at residues 26 to 123 and 93 to 103; these read NPVY…AAPR and DGGALGRGSWD. The tract at residues 54–105 is disordered; that stretch reads EDEVMPPQVLSDQSEEERAALSPLPEVPPWTGEVNPAQRDGGALGRGSWDSS. Position 129 is a phosphoserine (Ser129). An intrachain disulfide couples Cys130 to Cys146. An important for degradation of atrial natriuretic peptide by IDE region spans residues 147-151; the sequence is NSFRY.

The protein belongs to the natriuretic peptide family. As to quaternary structure, homodimer; disulfide-linked antiparallel dimer. Post-translationally, the precursor molecule is proteolytically cleaved by CORIN at Arg-123 to produce the atrial natriuretic peptide. Undergoes further proteolytic cleavage by unknown proteases to give rise to long-acting natriuretic peptide, vessel dilator and kaliuretic peptide. Additional processing gives rise to the auriculin and atriopeptin peptides. In the kidneys, alternative processing by an unknown protease results in the peptide urodilatin. Cleavage by MME initiates degradation of the factor and thereby regulates its activity. Degradation by IDE results in reduced activation of NPR1 (in vitro). During IDE degradation, the resulting products can temporarily stimulate NPR2 to produce cGMP, before the fragments are completely degraded and inactivated by IDE (in vitro). In terms of processing, degraded by IDE. Post-translationally, phosphorylation on Ser-129 decreases vasorelaxant activity.

The protein resides in the secreted. Its subcellular location is the perikaryon. The protein localises to the cell projection. Its function is as follows. Hormone that plays a key role in mediating cardio-renal homeostasis, and is involved in vascular remodeling and regulating energy metabolism. Acts by specifically binding and stimulating NPR1 to produce cGMP, which in turn activates effector proteins, such as PRKG1, that drive various biological responses. Regulates vasodilation, natriuresis, diuresis and aldosterone synthesis and is therefore essential for regulating blood pressure, controlling the extracellular fluid volume and maintaining the fluid-electrolyte balance. Also involved in inhibiting cardiac remodeling and cardiac hypertrophy by inducing cardiomyocyte apoptosis and attenuating the growth of cardiomyocytes and fibroblasts. Plays a role in female pregnancy by promoting trophoblast invasion and spiral artery remodeling in uterus, and thus prevents pregnancy-induced hypertension. In adipose tissue, acts in various cGMP- and PKG-dependent pathways to regulate lipid metabolism and energy homeostasis. This includes up-regulating lipid metabolism and mitochondrial oxygen utilization by activating the AMP-activated protein kinase (AMPK), and increasing energy expenditure by acting via MAPK11 to promote the UCP1-dependent thermogenesis of brown adipose tissue. Binds the clearance receptor NPR3 which removes the hormone from circulation. May have a role in cardio-renal homeostasis through regulation of natriuresis, diuresis, vasodilation, and inhibiting aldosterone synthesis. In vitro, promotes the production of cGMP and induces vasodilation. May promote natriuresis, at least in part, by enhancing prostaglandin E2 synthesis resulting in the inhibition of renal Na+-K+-ATPase. However reports on the involvement of this peptide in mammal blood volume and blood pressure homeostasis are conflicting; according to a report, in vivo it is not sufficient to activate cGMP and does not inhibit collecting duct transport nor effect diuresis and natriuresis. Appears to bind to specific receptors that are distinct from the receptors bound by atrial natriuretic peptide and vessel dilator. Possibly enhances protein excretion in urine by decreasing proximal tubular protein reabsorption. Functionally, may have a role in cardio-renal homeostasis through regulation of natriuresis, diuresis, and vasodilation. In vitro, promotes the production of cGMP and induces vasodilation. May promote natriuresis, at least in part, by enhancing prostaglandin E2 synthesis resulting in the inhibition of renal Na+-K+-ATPase. However reports on the involvement of this peptide in mammal blood volume and blood pressure homeostasis are conflicting; according to a report it is not sufficient to activate cGMP and does not inhibit collecting duct transport nor effect diuresis and natriuresis. Appears to bind to specific receptors that are distinct from the receptors bound by the atrial natriuretic and long-acting natriuretic peptides. Possibly functions in protein excretion in urine by maintaining the integrity of the proximal tubules and enhancing protein excretion by decreasing proximal tubular protein reabsorption. In terms of biological role, may have a role in cardio-renal homeostasis through regulation of diuresis and inhibiting aldosterone synthesis. In vitro, promotes the production of cGMP and induces vasodilation. May promote natriuresis, at least in part, by enhancing prostaglandin E2 synthesis resulting in the inhibition of renal Na+-K+-ATPase. May have a role in potassium excretion but not sodium excretion (natriuresis). Possibly enhances protein excretion in urine by decreasing proximal tubular protein reabsorption. Its function is as follows. Hormone produced in the kidneys that appears to be important for maintaining cardio-renal homeostasis. Mediates vasodilation, natriuresis and diuresis primarily in the renal system, in order to maintain the extracellular fluid volume and control the fluid-electrolyte balance. Specifically binds and stimulates cGMP production by renal transmembrane receptors, likely NPR1. Urodilatin not ANP, may be the natriuretic peptide responsible for the regulation of sodium and water homeostasis in the kidney. May have a role in cardio-renal homeostasis through regulation of natriuresis and vasodilation. In vivo promotes natriuresis and in vitro, vasodilates renal artery strips. Functionally, may have a role in cardio-renal homeostasis through regulation of regulation of natriuresis and vasodilation. In vivo promotes natriuresis. In vitro, vasodilates intestinal smooth muscle but not smooth muscle strips. In terms of biological role, may have a role in cardio-renal homeostasis through regulation of natriuresis and vasodilation. In vivo promotes natriuresis. In vitro, selectively vasodilates intestinal and vascular smooth muscle strips. Its function is as follows. May have a role in cardio-renal homeostasis through regulation of natriuresis and vasodilation. In vivo promotes natriuresis. In vitro, selectively vasodilates intestinal smooth muscle but not vascular smooth muscle strips. This Equus caballus (Horse) protein is Natriuretic peptides A (NPPA).